The chain runs to 402 residues: S-adenosylmethionine synthase (402 aa).

An ATP-binding site is contributed by histidine 16. Aspartate 18 serves as a coordination point for Mg(2+). Glutamate 44 contacts K(+). The L-methionine site is built by glutamate 57 and glutamine 103. A flexible loop region spans residues 103–113; that stretch reads QSPDIAQGVDT. ATP is bound by residues 178–180, 249–250, aspartate 258, 264–265, alanine 281, and lysine 285; these read DGK, KF, and RK. Aspartate 258 contacts L-methionine. Lysine 289 lines the L-methionine pocket.

This sequence belongs to the AdoMet synthase family. As to quaternary structure, homotetramer; dimer of dimers. It depends on Mg(2+) as a cofactor. Requires K(+) as cofactor.

The protein localises to the cytoplasm. The catalysed reaction is L-methionine + ATP + H2O = S-adenosyl-L-methionine + phosphate + diphosphate. It functions in the pathway amino-acid biosynthesis; S-adenosyl-L-methionine biosynthesis; S-adenosyl-L-methionine from L-methionine: step 1/1. Functionally, catalyzes the formation of S-adenosylmethionine (AdoMet) from methionine and ATP. The overall synthetic reaction is composed of two sequential steps, AdoMet formation and the subsequent tripolyphosphate hydrolysis which occurs prior to release of AdoMet from the enzyme. This Mycolicibacterium gilvum (strain PYR-GCK) (Mycobacterium gilvum (strain PYR-GCK)) protein is S-adenosylmethionine synthase.